The chain runs to 610 residues: Dapper homolog 3 (610 aa).

Residue serine 6 is modified to Phosphoserine. Disordered stretches follow at residues 50-76 (PGMG…RRAA), 102-179 (LESG…SVGA), and 200-579 (TCSS…PAGP). The span at 56–69 (EAEDEEDAEEDEDA) shows a compositional bias: acidic residues. The stretch at 63-87 (AEEDEDAAAARRAAAALEEQLEALP) forms a coiled coil. The span at 120–138 (DPSSTGGPDSPPSTFCGDS) shows a compositional bias: low complexity. Serine 165 and serine 237 each carry phosphoserine. Arginine 255 carries the post-translational modification Omega-N-methylarginine. Pro residues predominate over residues 317–331 (PPEPAPPAAASPPSS). The segment covering 344 to 356 (PGAPAASRGLPGR) has biased composition (low complexity). Phosphoserine is present on residues serine 409 and serine 456. The span at 475-485 (PRGPAPSPSAP) shows a compositional bias: pro residues. Low complexity predominate over residues 524 to 545 (ESESSASEGESPAFSSASSDSD). Residues 566–576 (GPGGAAGGGTP) are compositionally biased toward gly residues. The PDZ-binding motif lies at 607-610 (MTTV).

This sequence belongs to the dapper family. As to quaternary structure, can form homodimers and heterodimers with DACT1 or DACT3. Interacts with CSNK1D, PKA catalytic subunit, PKC-type kinase, DVL1, DVL2, DVL3, VANGL1, VANGL2 and CTNND1. Expressed in brain and uterus.

Its function is as follows. May be involved in regulation of intracellular signaling pathways during development. Specifically thought to play a role in canonical and/or non-canonical Wnt signaling pathways through interaction with DSH (Dishevelled) family proteins. This chain is Dapper homolog 3 (Dact3), found in Mus musculus (Mouse).